We begin with the raw amino-acid sequence, 309 residues long: MSEMPKVRGRLTQARPLSDLTWLRVGGPADWLFQPADVEDLSDFLARLPEEVAVFPMGVGSNLIVRDGGLRCVVIRLGRGFNQIDISGTRVVAGAAALDAHVARKAADAGLDLTFLRTIPGSIGGAVRMNAGCYGSYTADVLVEVQVVSRTGEVTTLAARDLQLGYRHSTLAEGAVLTKAVFEAPRGDPETLHARMTDQLARRDATQPTKERSAGSTFRNPAGFSSTGRSDDVHDLKAWKVIDDAGMRGARRGGAQMSEMHSNFMVNTGRATAADLEGLGEEVRKKVYDSSGITLEWEIMRVGEKLSSD.

Residues 24-187 form the FAD-binding PCMH-type domain; the sequence is RVGGPADWLF…TKAVFEAPRG (164 aa). Residue R167 is part of the active site. Positions 200–213 are enriched in basic and acidic residues; sequence LARRDATQPTKERS. Positions 200–230 are disordered; sequence LARRDATQPTKERSAGSTFRNPAGFSSTGRS. The segment covering 214–228 has biased composition (polar residues); it reads AGSTFRNPAGFSSTG. The Proton donor role is filled by S216. E298 is a catalytic residue.

This sequence belongs to the MurB family. FAD is required as a cofactor.

Its subcellular location is the cytoplasm. It carries out the reaction UDP-N-acetyl-alpha-D-muramate + NADP(+) = UDP-N-acetyl-3-O-(1-carboxyvinyl)-alpha-D-glucosamine + NADPH + H(+). It participates in cell wall biogenesis; peptidoglycan biosynthesis. Cell wall formation. This is UDP-N-acetylenolpyruvoylglucosamine reductase from Roseobacter denitrificans (strain ATCC 33942 / OCh 114) (Erythrobacter sp. (strain OCh 114)).